We begin with the raw amino-acid sequence, 2486 residues long: Nonribosomal peptide synthetase nanA (2486 aa).

Residues 231–637 (FSARQPLSPA…GRRGTQVKLR (407 aa)) are adenylation 1. Residues 786–860 (TDIELKVHAL…DLARSAKETS (75 aa)) form the Carrier 1 domain. Position 820 is an O-(pantetheine 4'-phosphoryl)serine (Ser820). A condensation 1 region spans residues 902-1314 (EDAYPCTPLQ…LKSVPRVSSQ (413 aa)). The segment at 1339 to 1735 (RAQARKTPLA…GRIGDQMKIR (397 aa)) is adenylation 2. 2 Carrier domains span residues 1872–1948 (PPST…SSAS) and 2404–2480 (SSSE…QTQA). O-(pantetheine 4'-phosphoryl)serine occurs at positions 1909 and 2441. Residues 2404-2480 (SSSETIVEPL…KLARLLQTQA (77 aa)) are condensation 2.

It belongs to the NRP synthetase family.

It functions in the pathway secondary metabolite biosynthesis. Its function is as follows. Nonribosomal peptide synthetase; part of the gene cluster that mediates the biosynthesis of the benzazepine alkaloid nanangelenin A which contains an unprecedented 3,4-dihydro-1-benzazepine-2,5-dione-N-prenyl-N-acetoxy-anthranilamide scaffold. The first step of nanangelenin biosynthesis is catalyzed by the indoleamine 2,3-dioxygenase nanC which produces N-formyl-kynurenine through the catabolism of tryptophan. The two-module NRPS nanA then utilizes anthranilate (Ant) and L-kynurenine (L-Kyn) to assemble the dipeptide product nanangelenin B. The first adenylation domain of nanA (A1) loads anthranilate onto the T1 domain, while A2 loads kynurenine, generated through spontaneous nonenzymatic deformylation of the nanC-supplied N-formyl-kynurenine. The peptide bond formation between the tethered amino acids is catalyzed by the first condensation domain (C1) between anthranilate's carbonyl carbon and kynurenine's aliphatic primary amine. The second C domain (C2) catalyzes the final cyclization event between the aromatic amine of kynurenine and the tethered carbonyl carbon, yielding nanangelenin B. The terminal T3 domain enhances the catalytic efficiency of C2, suggesting the T2-tethered Ant-L-Kyn is transferred to T3 prior to cyclization by C2. Once released from nanA, nanangelenin B is then prenylated by the prenyltransferase nanD to form nanangelenin C. Nanangelenin C is then N-hydroxylated by the FAD-dependent monooxygenase nanF and further acetylated by the acetyltransferase nanB to yield nanangelenin F. Finally, the N-methyltransferase nanE methylates the amide nitrogen of 1-benzazepine to convert nanangelenin F into nanangelenin A. NanE is also able to methylate most of the intermediates of the pathway such as nanangelenin B and nanangelenin C to produce nanangelenin D and nanangelenin E, respectively. The protein is Nonribosomal peptide synthetase nanA of Aspergillus nanangensis.